We begin with the raw amino-acid sequence, 665 residues long: MKKPFYITTPIYYPSGKLHIGSAYTTIACDVLARYKRLMGHEVFYLTGLDEHGQKIQTKAKEAGITPQTYVDNMAKDVKALWQLLDISYDTFIRTTDDYHEEVVAAVFEKLLAQDDIYLGEYSGWYSVSDEEFFTESQLKEVFRDEDGQVIGGIAPSGHEVEWVSEESYFLRLSKYDDRLVAFFKERPDFIQPDGRMNEMVKNFIEPGLEDLAVSRTTFTWGVPVPSDPKHVVYVWIDALLNYATALGYRQANHANFDKFWNGTVFHMVGKDILRFHSIYWPILLMMLDLPMPDRLIAHGWFVMKDGKMSKSKGNVVYPEMLVERFGLDPLRYYLMRSLPVGSDGTFTPEDYVGRINYELANDLGNLLNRTVAMINKYFDGTVPAYVDNGTAFDADLSQLIDAQLADYHKHMEAVDYPRALEAVWTIIARTNKYIDETAPWVLAKEDGDKAQLASVMAHLAASLRLVAHVIQPFMMETSAAIMAQLGLEPVSDLSTLALADFPANTKVVAKGTPIFPRLDMEAEIDYIKAQMGDSSAISQEKEWVPEEVALKSEKDVITFETFDAVEIRVAEVKEVSKVEGSEKLLRFRVDAGDGQDRQILSGIAKFYPNEQELVGKKLQIVANLKPRKMMKKYISQGMILSAEHGDQLTVLTVDSSVPNGSIIG.

The 'HIGH' region signature appears at 12 to 22 (YYPSGKLHIGS). The 'KMSKS' region motif lies at 308 to 312 (KMSKS). K311 contributes to the ATP binding site. In terms of domain architecture, tRNA-binding spans 562–665 (TFDAVEIRVA…SSVPNGSIIG (104 aa)).

Belongs to the class-I aminoacyl-tRNA synthetase family. MetG type 2B subfamily. As to quaternary structure, homodimer.

Its subcellular location is the cytoplasm. It carries out the reaction tRNA(Met) + L-methionine + ATP = L-methionyl-tRNA(Met) + AMP + diphosphate. In terms of biological role, is required not only for elongation of protein synthesis but also for the initiation of all mRNA translation through initiator tRNA(fMet) aminoacylation. The sequence is that of Methionine--tRNA ligase (metG) from Streptococcus pyogenes serotype M1.